The sequence spans 404 residues: Probable tRNA sulfurtransferase (404 aa).

A THUMP domain is found at 61–166 (EAVSERLKDV…SGYSYIMCDE (106 aa)). ATP contacts are provided by residues 184–185 (LL), 209–210 (HF), arginine 266, glycine 288, and glutamine 297.

Belongs to the ThiI family.

The protein localises to the cytoplasm. It catalyses the reaction [ThiI sulfur-carrier protein]-S-sulfanyl-L-cysteine + a uridine in tRNA + 2 reduced [2Fe-2S]-[ferredoxin] + ATP + H(+) = [ThiI sulfur-carrier protein]-L-cysteine + a 4-thiouridine in tRNA + 2 oxidized [2Fe-2S]-[ferredoxin] + AMP + diphosphate. The enzyme catalyses [ThiS sulfur-carrier protein]-C-terminal Gly-Gly-AMP + S-sulfanyl-L-cysteinyl-[cysteine desulfurase] + AH2 = [ThiS sulfur-carrier protein]-C-terminal-Gly-aminoethanethioate + L-cysteinyl-[cysteine desulfurase] + A + AMP + 2 H(+). It participates in cofactor biosynthesis; thiamine diphosphate biosynthesis. Functionally, catalyzes the ATP-dependent transfer of a sulfur to tRNA to produce 4-thiouridine in position 8 of tRNAs, which functions as a near-UV photosensor. Also catalyzes the transfer of sulfur to the sulfur carrier protein ThiS, forming ThiS-thiocarboxylate. This is a step in the synthesis of thiazole, in the thiamine biosynthesis pathway. The sulfur is donated as persulfide by IscS. The protein is Probable tRNA sulfurtransferase of Bacillus cereus (strain B4264).